The sequence spans 339 residues: uncharacterized protein (339 aa).

Isoleucine 54, lysine 78, aspartate 101, asparagine 128, tyrosine 213, and lysine 217 together coordinate NADP(+). The active-site Proton donor is the tyrosine 213. Lysine 217 acts as the Lowers pKa of active site Tyr in catalysis.

It belongs to the short-chain dehydrogenases/reductases (SDR) family.

This is an uncharacterized protein from Schizosaccharomyces pombe (strain 972 / ATCC 24843) (Fission yeast).